The primary structure comprises 450 residues: MQSIFGTDGIRGRFNEELTYSLAYKVGYALGSTLKKKSPILIGRDTRISGDILLQAITQGINESGKKFINLGICPTPAIPFLIKKENLSSGIMISASHNPPEYNGIKIFDHNGQKITRYFENKIQKLIEETNQNISVPTKVIPLNTNKNLMDIYIKSLVQAMDGENLSGLKIILDTCYGSATTCAKEIFQSLGADVRVINNSKNGSKINMNCGSTNLAPLKKALKESPADMGFSFDEDADRVIGIDSKGNVLDGDHILFLWGRELMEQKILTNNLLISTQMANLGFEKAWKKIGGVLYRTDVGDKYVHEAIKEKRAVLGGEQSGHILSKINNFSGDGILTALQISKYCKKKNINLNDWLKSSFEPFPQKLTNIKLNFNINKLSLKAKILIDKTIENFQALYSHNCRVYIRPSGTEPLIRVLVEAKSHKKVNSLSSEITNKLSLEINKIIN.

S97 acts as the Phosphoserine intermediate in catalysis. 4 residues coordinate Mg(2+): S97, D236, D238, and D240. S97 carries the phosphoserine modification.

The protein belongs to the phosphohexose mutase family. The cofactor is Mg(2+). Post-translationally, activated by phosphorylation.

It carries out the reaction alpha-D-glucosamine 1-phosphate = D-glucosamine 6-phosphate. Catalyzes the conversion of glucosamine-6-phosphate to glucosamine-1-phosphate. The protein is Phosphoglucosamine mutase of Prochlorococcus marinus (strain AS9601).